The chain runs to 884 residues: Valine--tRNA ligase (884 aa).

The 'HIGH' region motif lies at 46–56; the sequence is PNVTGKLHLGH. Positions 520–524 match the 'KMSKS' region motif; the sequence is KMSKS. Lys523 is a binding site for ATP. Positions 809–844 form a coiled coil; the sequence is LADLLNVEEELARLEKELAKWQKELNMVGKKLSNER.

Belongs to the class-I aminoacyl-tRNA synthetase family. ValS type 1 subfamily. In terms of assembly, monomer.

Its subcellular location is the cytoplasm. The catalysed reaction is tRNA(Val) + L-valine + ATP = L-valyl-tRNA(Val) + AMP + diphosphate. Functionally, catalyzes the attachment of valine to tRNA(Val). As ValRS can inadvertently accommodate and process structurally similar amino acids such as threonine, to avoid such errors, it has a 'posttransfer' editing activity that hydrolyzes mischarged Thr-tRNA(Val) in a tRNA-dependent manner. The protein is Valine--tRNA ligase of Streptococcus agalactiae serotype Ia (strain ATCC 27591 / A909 / CDC SS700).